The chain runs to 670 residues: E3 ubiquitin-protein ligase MAG2 (670 aa).

Disordered stretches follow at residues 1–84 (MVEP…TSTR) and 124–145 (EVER…RDEH). Positions 20 to 39 (DTLNATSNSSKQGVSNNKRN) are enriched in polar residues. The span at 51-66 (SDGRDNAHNYHGEGRR) shows a compositional bias: basic and acidic residues. The RING-type zinc finger occupies 195–250 (CSICLSEEPVAPRMVTCGHIFCLSCLLNFFSIEETVKNKETGYSKKKKYKECPLCG). The interval 609–670 (TEDEKASKEN…LFSSNHQALG (62 aa)) is disordered. The segment covering 610-622 (EDEKASKENKEFQ) has biased composition (basic and acidic residues). Over residues 637–649 (VTDSTDSPPTSNG) the composition is skewed to low complexity.

This sequence belongs to the RNF10 family.

It is found in the cytoplasm. It carries out the reaction S-ubiquitinyl-[E2 ubiquitin-conjugating enzyme]-L-cysteine + [acceptor protein]-L-lysine = [E2 ubiquitin-conjugating enzyme]-L-cysteine + N(6)-ubiquitinyl-[acceptor protein]-L-lysine.. The protein operates within protein modification; protein ubiquitination. Functionally, E3 ubiquitin-protein ligase involved in the degradation of non-functional 18S rRNAs in response to stalled ribosomes. Catalyzes monoubiquitination of RPS3/uS3 in response to stalled ribosomes, initiating a HEL2-dependent response that activates the degradation of non-functional 18S rRNAs. This is E3 ubiquitin-protein ligase MAG2 from Saccharomyces cerevisiae (strain ATCC 204508 / S288c) (Baker's yeast).